Reading from the N-terminus, the 202-residue chain is Prohormone-4 (202 aa).

The first 28 residues, 1–28 (MVQRLCTSVAALSLALSACVFFPRAVMA), serve as a signal peptide directing secretion. Residues 46–86 (ACRPYEPFKCPGDDTCISIQYLCDGAPDCQDGYDEDSRLCT) enclose the LDL-receptor class A domain. 3 disulfide bridges follow: Cys-47–Cys-61, Cys-55–Cys-74, and Cys-68–Cys-85.

Its subcellular location is the secreted. The polypeptide is Prohormone-4 (Apis mellifera (Honeybee)).